The sequence spans 625 residues: Threonine--tRNA ligase (625 aa).

The editing domain stretch occupies residues 1–149 (MRVLLIHAKR…RNYEAKTTAR (149 aa)). Catalytic regions lie at residues 197–494 (NPVN…PYIP) and 198–494 (PVNK…PYIP). Residues cysteine 291, histidine 342, and histidine 463 each contribute to the Zn(2+) site.

This sequence belongs to the class-II aminoacyl-tRNA synthetase family. In terms of assembly, homodimer. Requires Zn(2+) as cofactor.

Its subcellular location is the cytoplasm. It carries out the reaction tRNA(Thr) + L-threonine + ATP = L-threonyl-tRNA(Thr) + AMP + diphosphate + H(+). In terms of biological role, catalyzes the attachment of threonine to tRNA(Thr) in a two-step reaction: L-threonine is first activated by ATP to form Thr-AMP and then transferred to the acceptor end of tRNA(Thr). Also edits incorrectly charged L-seryl-tRNA(Thr). The chain is Threonine--tRNA ligase from Hyperthermus butylicus (strain DSM 5456 / JCM 9403 / PLM1-5).